Reading from the N-terminus, the 233-residue chain is Outer membrane protein MIP (233 aa).

A signal peptide spans 1–20; the sequence is MKMKLVTAAVMGLAMSTAMA. The PPIase FKBP-type domain occupies 144 to 233; it reads SDTVTVEYTG…IHLISVKKSS (90 aa).

The protein belongs to the FKBP-type PPIase family.

The protein localises to the cell outer membrane. It carries out the reaction [protein]-peptidylproline (omega=180) = [protein]-peptidylproline (omega=0). Its activity is regulated as follows. Strongly inhibited by FK506 but is completely resistant to cyclosporin A. Functionally, essential virulence factor associated with macrophage infectivity. Exhibits PPIase activity. In Legionella pneumophila subsp. pneumophila (strain Philadelphia 1 / ATCC 33152 / DSM 7513), this protein is Outer membrane protein MIP (mip).